A 358-amino-acid chain; its full sequence is DNA replication and repair protein RecF (358 aa).

30–37 is a binding site for ATP; sequence GANGSGKT.

This sequence belongs to the RecF family.

The protein localises to the cytoplasm. Functionally, the RecF protein is involved in DNA metabolism; it is required for DNA replication and normal SOS inducibility. RecF binds preferentially to single-stranded, linear DNA. It also seems to bind ATP. In Acinetobacter baylyi (strain ATCC 33305 / BD413 / ADP1), this protein is DNA replication and repair protein RecF.